The primary structure comprises 508 residues: Beta-glucosidase 10 (508 aa).

Positions 1-22 (MKLYSLLSVFLVILLATSDSDA) are cleaved as a signal peptide. A beta-D-glucoside is bound by residues Q42, H142, and 187 to 188 (NE). The active-site Proton donor is E188. The cysteines at positions 207 and 215 are disulfide-linked. N-linked (GlcNAc...) asparagine glycosylation is found at N214 and N219. Y331 provides a ligand contact to a beta-D-glucoside. N365 carries an N-linked (GlcNAc...) asparagine glycan. A beta-D-glucoside is bound at residue E398. E398 functions as the Nucleophile in the catalytic mechanism. N-linked (GlcNAc...) asparagine glycosylation is present at N431. Residues W441 and F457 each contribute to the a beta-D-glucoside site. N-linked (GlcNAc...) asparagine glycans are attached at residues N463, N485, and N501.

Belongs to the glycosyl hydrolase 1 family.

The enzyme catalyses Hydrolysis of terminal, non-reducing beta-D-glucosyl residues with release of beta-D-glucose.. This Arabidopsis thaliana (Mouse-ear cress) protein is Beta-glucosidase 10.